The primary structure comprises 211 residues: MSIADIRTDYAQADLSETDTAADPVTQFAKWFDEALHAEVPEPNAMGVSTVGENGRPSSRIVLIKDFDQRGFTWFTNYDSRKGRELEKNPYAALLFHWIALEREVRIEGRVERVSAEESEQYFQSRPVKSRLSAIASAQSAPIADRAALEAQYAKVEAQHGDSTPRPPHWGGYRLQPEYVEFWQGRRSRLHDRIAYTLQKDGQWTRQRLQP.

Substrate contacts are provided by residues 7–10 (RTDY) and K65. FMN contacts are provided by residues 60 to 65 (RIVLIK), 75 to 76 (FT), R81, and K82. Substrate-binding residues include Y122, R126, and S130. FMN is bound by residues 139 to 140 (QS) and W183. 189-191 (RLH) lines the substrate pocket. Residue R193 coordinates FMN.

Belongs to the pyridoxamine 5'-phosphate oxidase family. Homodimer. FMN is required as a cofactor.

It carries out the reaction pyridoxamine 5'-phosphate + O2 + H2O = pyridoxal 5'-phosphate + H2O2 + NH4(+). It catalyses the reaction pyridoxine 5'-phosphate + O2 = pyridoxal 5'-phosphate + H2O2. It participates in cofactor metabolism; pyridoxal 5'-phosphate salvage; pyridoxal 5'-phosphate from pyridoxamine 5'-phosphate: step 1/1. Its pathway is cofactor metabolism; pyridoxal 5'-phosphate salvage; pyridoxal 5'-phosphate from pyridoxine 5'-phosphate: step 1/1. In terms of biological role, catalyzes the oxidation of either pyridoxine 5'-phosphate (PNP) or pyridoxamine 5'-phosphate (PMP) into pyridoxal 5'-phosphate (PLP). The polypeptide is Pyridoxine/pyridoxamine 5'-phosphate oxidase (Herminiimonas arsenicoxydans).